We begin with the raw amino-acid sequence, 162 residues long: MIRVATAECFTHGKVAREIHAFSMGYPLNYNWKISAELVLVAGLFIPTLSGVRNILGFEPPMPRATINDIKVYGEEEDEEVALMMARAVRELADSDIGIGTTAGIGRGGIAIASRDRWDVINSEVHADLRYPDTERILERQKSGIQRALQLLESFIVDFKDR.

It belongs to the UPF0254 family.

This chain is UPF0254 protein MTH1148 homolog, found in Methanothermobacter thermautotrophicus (strain Winter) (Methanobacterium thermoautotrophicum).